The following is a 922-amino-acid chain: Phosphoenolpyruvate carboxylase (922 aa).

The tract at residues 1 to 20 (MTKTLHARPSAATDTTFAPP) is disordered. Active-site residues include histidine 142 and lysine 581.

Belongs to the PEPCase type 1 family. Requires Mg(2+) as cofactor.

It catalyses the reaction oxaloacetate + phosphate = phosphoenolpyruvate + hydrogencarbonate. In terms of biological role, forms oxaloacetate, a four-carbon dicarboxylic acid source for the tricarboxylic acid cycle. The chain is Phosphoenolpyruvate carboxylase (ppc) from Methylorubrum extorquens (strain ATCC 14718 / DSM 1338 / JCM 2805 / NCIMB 9133 / AM1) (Methylobacterium extorquens).